The following is a 217-amino-acid chain: Protein OPI10 homolog (217 aa).

The protein belongs to the OPI10 family.

In Dictyostelium discoideum (Social amoeba), this protein is Protein OPI10 homolog.